A 237-amino-acid chain; its full sequence is 1-(5-phosphoribosyl)-5-[(5-phosphoribosylamino)methylideneamino] imidazole-4-carboxamide isomerase (237 aa).

The active-site Proton acceptor is the aspartate 8. The active-site Proton donor is the aspartate 130.

The protein belongs to the HisA/HisF family.

Its subcellular location is the cytoplasm. The catalysed reaction is 1-(5-phospho-beta-D-ribosyl)-5-[(5-phospho-beta-D-ribosylamino)methylideneamino]imidazole-4-carboxamide = 5-[(5-phospho-1-deoxy-D-ribulos-1-ylimino)methylamino]-1-(5-phospho-beta-D-ribosyl)imidazole-4-carboxamide. It participates in amino-acid biosynthesis; L-histidine biosynthesis; L-histidine from 5-phospho-alpha-D-ribose 1-diphosphate: step 4/9. In Caldicellulosiruptor saccharolyticus (strain ATCC 43494 / DSM 8903 / Tp8T 6331), this protein is 1-(5-phosphoribosyl)-5-[(5-phosphoribosylamino)methylideneamino] imidazole-4-carboxamide isomerase.